The sequence spans 364 residues: GTPase Obg (364 aa).

In terms of domain architecture, Obg spans 1–159 (MKFVDEAYID…KSLKLELKVL (159 aa)). The OBG-type G domain maps to 160–334 (ADVGLLGMPN…LVKTIYQHVK (175 aa)). Residues 166-173 (GMPNAGKS), 191-195 (FTTLH), 213-216 (DLPG), 284-287 (NKLD), and 315-317 (SAL) each bind GTP. Mg(2+) contacts are provided by Ser-173 and Thr-193. The segment at 337–364 (QKSEQPEEEVDPRFIELPPEPAKPASSD) is disordered.

The protein belongs to the TRAFAC class OBG-HflX-like GTPase superfamily. OBG GTPase family. Monomer. Mg(2+) serves as cofactor.

The protein resides in the cytoplasm. Its function is as follows. An essential GTPase which binds GTP, GDP and possibly (p)ppGpp with moderate affinity, with high nucleotide exchange rates and a fairly low GTP hydrolysis rate. Plays a role in control of the cell cycle, stress response, ribosome biogenesis and in those bacteria that undergo differentiation, in morphogenesis control. The polypeptide is GTPase Obg (Polaromonas naphthalenivorans (strain CJ2)).